Here is an 82-residue protein sequence, read N- to C-terminus: Putative membrane protein insertion efficiency factor (82 aa).

The protein belongs to the UPF0161 family.

The protein resides in the cell inner membrane. In terms of biological role, could be involved in insertion of integral membrane proteins into the membrane. The protein is Putative membrane protein insertion efficiency factor of Francisella tularensis subsp. holarctica (strain LVS).